A 130-amino-acid polypeptide reads, in one-letter code: Small ribosomal subunit protein uS11c (130 aa).

It belongs to the universal ribosomal protein uS11 family. As to quaternary structure, part of the 30S ribosomal subunit.

It localises to the plastid. The protein resides in the chloroplast. This chain is Small ribosomal subunit protein uS11c, found in Drimys granadensis.